The primary structure comprises 197 residues: UDP-N-acetylglucosamine transferase subunit alg13 (197 aa).

A disordered region spans residues 174–197 (VRGPDQKNQPTLEQVMSDEMGFVD).

The protein belongs to the glycosyltransferase 28 family. As to quaternary structure, heterodimer with alg14 to form a functional enzyme.

It localises to the endoplasmic reticulum. It carries out the reaction an N-acetyl-alpha-D-glucosaminyl-diphospho-di-trans,poly-cis-dolichol + UDP-N-acetyl-alpha-D-glucosamine = an N,N'-diacetylchitobiosyl-diphospho-di-trans,poly-cis-dolichol + UDP + H(+). Its function is as follows. Involved in protein N-glycosylation. Essential for the second step of the dolichol-linked oligosaccharide pathway. This is UDP-N-acetylglucosamine transferase subunit alg13 (alg13) from Aspergillus fumigatus (strain ATCC MYA-4609 / CBS 101355 / FGSC A1100 / Af293) (Neosartorya fumigata).